The sequence spans 781 residues: Putative amine oxidase [copper-containing] (781 aa).

The signal sequence occupies residues Met1–Ala34. An intrachain disulfide couples Cys199 to Cys203. Residue Phe385 to Asn395 participates in substrate binding. The Proton acceptor role is filled by Asp387. Cys405 and Cys432 are disulfide-bonded. Ile472–Tyr477 serves as a coordination point for substrate. Tyr475 serves as the catalytic Schiff-base intermediate with substrate; via topaquinone. Position 475 is a 2',4',5'-topaquinone (Tyr475). Cu cation is bound by residues His525 and His527. Asp534, Asp536, Glu579, Phe671, Asp674, Glu676, Asp682, and Leu683 together coordinate Ca(2+). The Mn(2+) site is built by Asp534 and Asp536. Asp682 contacts Mn(2+). His693 is a Cu cation binding site.

It belongs to the copper/topaquinone oxidase family. Homodimer. The cofactor is Cu cation. Ca(2+) serves as cofactor. L-topaquinone is required as a cofactor. Requires Mn(2+) as cofactor. Post-translationally, topaquinone (TPQ) is generated by copper-dependent autoxidation of a specific tyrosyl residue. Prismatic layer of shell (at protein level). Expressed primarily in the mantle with highest level in the mantle edge and lower level in the mantle pallium.

It is found in the secreted. The sequence is that of Putative amine oxidase [copper-containing] from Margaritifera margaritifera (Freshwater pearl mussel).